The following is a 436-amino-acid chain: Gamma-glutamyl phosphate reductase (436 aa).

Belongs to the gamma-glutamyl phosphate reductase family.

Its subcellular location is the cytoplasm. The enzyme catalyses L-glutamate 5-semialdehyde + phosphate + NADP(+) = L-glutamyl 5-phosphate + NADPH + H(+). It functions in the pathway amino-acid biosynthesis; L-proline biosynthesis; L-glutamate 5-semialdehyde from L-glutamate: step 2/2. Its function is as follows. Catalyzes the NADPH-dependent reduction of L-glutamate 5-phosphate into L-glutamate 5-semialdehyde and phosphate. The product spontaneously undergoes cyclization to form 1-pyrroline-5-carboxylate. This chain is Gamma-glutamyl phosphate reductase, found in Prochlorococcus marinus (strain SARG / CCMP1375 / SS120).